The sequence spans 876 residues: Alanine--tRNA ligase (876 aa).

Zn(2+) is bound by residues histidine 564, histidine 568, cysteine 666, and histidine 670.

Belongs to the class-II aminoacyl-tRNA synthetase family. As to quaternary structure, homotetramer. The cofactor is Zn(2+).

The protein localises to the cytoplasm. The catalysed reaction is tRNA(Ala) + L-alanine + ATP = L-alanyl-tRNA(Ala) + AMP + diphosphate. Functionally, catalyzes the attachment of alanine to tRNA(Ala) in a two-step reaction: alanine is first activated by ATP to form Ala-AMP and then transferred to the acceptor end of tRNA(Ala). Also edits incorrectly charged Ser-tRNA(Ala) and Gly-tRNA(Ala) via its editing domain. In Salmonella typhimurium (strain LT2 / SGSC1412 / ATCC 700720), this protein is Alanine--tRNA ligase.